Reading from the N-terminus, the 156-residue chain is Ribosome maturation factor RimP (156 aa).

Belongs to the RimP family.

It localises to the cytoplasm. Functionally, required for maturation of 30S ribosomal subunits. The polypeptide is Ribosome maturation factor RimP (Anoxybacillus flavithermus (strain DSM 21510 / WK1)).